The sequence spans 256 residues: MLNLPRLLYPLYERRLLKELNGARQPGHVAIMCDGNRRWAREAGFVDLSHGHRVGAKKIGELVRWCDDVDVDLVTVYLLSTENLGRDEAELQLLYDIIGDVVAELSLPETNCRVRLVGHLDLLPKEFAERLRGTVCETVDHTGVAVNIAVGYGGRQEIVDAVRDLLTSARDEGKTLDEVIESVDAQAISTHLYTSGQPDPDLVIRTSGEQRLSGFMLWQSAYSEIWFTDTYWPAFRRIDFLRALRDYSQRSRRFGK.

Residue Asp-34 is part of the active site. A Mg(2+)-binding site is contributed by Asp-34. Residues 35-38, Trp-39, His-52, and 80-82 contribute to the substrate site; these read GNRR and STE. Asn-83 acts as the Proton acceptor in catalysis. Substrate is bound by residues Arg-86, Arg-205, and 211–213; that span reads RLS. Mg(2+) is bound at residue Glu-224.

This sequence belongs to the UPP synthase family. Homodimer. The cofactor is Mg(2+).

In terms of biological role, catalyzes the condensation of isopentenyl diphosphate (IPP) with allylic pyrophosphates generating different type of terpenoids. The polypeptide is Isoprenyl transferase 1 (Corynebacterium efficiens (strain DSM 44549 / YS-314 / AJ 12310 / JCM 11189 / NBRC 100395)).